Consider the following 655-residue polypeptide: Epithelial sodium channel subunit alpha (655 aa).

Residues 1–55 lie on the Cytoplasmic side of the membrane; it reads MTDKEEEAEGGKKKEPMIGFYDSYQELFEFFCNNTTIHGTIRMVCSKHNNMKTVS. Residues 56-76 traverse the membrane as a helical segment; the sequence is WTILFITTFGVMYWQFGLLLG. Over 77–531 the chain is Extracellular; it reads QYYSYPVSIT…SQWSLWFGSS (455 aa). 10 disulfides stabilise this stretch: Cys-102–Cys-275, Cys-199–Cys-206, Cys-252–Cys-259, Cys-364–Cys-448, Cys-385–Cys-425, Cys-385–Cys-444, Cys-389–Cys-440, Cys-398–Cys-425, Cys-398–Cys-448, and Cys-400–Cys-414. Residues 532-552 form a helical membrane-spanning segment; that stretch reads VLSVVEMGELVFDLIAVGVIV. Residues 553 to 655 lie on the Cytoplasmic side of the membrane; that stretch reads LRRRRREKCQ…QEASEGPTVL (103 aa). A disordered region spans residues 561–587; the sequence is CQASSDGEGTSDSTAGTHRGQENASRS. Over residues 562 to 586 the composition is skewed to polar residues; that stretch reads QASSDGEGTSDSTAGTHRGQENASR.

Belongs to the amiloride-sensitive sodium channel (TC 1.A.6) family. SCNN1A subfamily. As to quaternary structure, heterotrimer; containing an alpha/SCNN1A, a beta/SCNN1B and a gamma/SCNN1G subunit. As to expression, strongly expressed in gill, kidney and rectum (at protein level). More weakly expressed in muscle, brain, heart, liver and intestine.

The protein resides in the apical cell membrane. The protein localises to the cell projection. Its subcellular location is the cilium. It is found in the cytoplasmic granule. It localises to the cytoplasm. The protein resides in the cytoplasmic vesicle. The protein localises to the secretory vesicle. Its subcellular location is the acrosome. It is found in the flagellum. It carries out the reaction Na(+)(in) = Na(+)(out). With respect to regulation, originally identified and characterized by its inhibition by the diuretic drug amiloride. Its function is as follows. This is one of the three pore-forming subunits of the heterotrimeric epithelial sodium channel (ENaC), a critical regulator of sodium balance and fluid homeostasis. ENaC operates in epithelial tissues, where it mediates the electrodiffusion of sodium ions from extracellular fluid through the apical membrane of cells, with water following osmotically. This is Epithelial sodium channel subunit alpha (scnn1a) from Neoceratodus forsteri (Australian lungfish).